The following is a 105-amino-acid chain: UPF0145 protein CPS_2458 (105 aa).

The protein belongs to the UPF0145 family.

The polypeptide is UPF0145 protein CPS_2458 (Colwellia psychrerythraea (strain 34H / ATCC BAA-681) (Vibrio psychroerythus)).